Consider the following 518-residue polypeptide: MIPDVSQALAWLEKHPQALKGIQRGLERETLRVNADGTLATTGHPEALGSALTHKWITTDFAEALLEFITPVDGDIQHMLTFMRDLHRYTARKLGDERMWPLSMPCYIAEGQDIELAQYGTSNTGRFKTLYREGLKNRYGALMQTISGVHYNFSLPMAFWQAKCGVTEGEAAKEKISAGYFRLIRNYYRFGWVIPYLFGASPAICSSFLQGKPTTLPFEKTDCGMYYLPYATSLRLSDLGYTNKSQSNLGITFNDLHEYVAGLKRAIKTPSEEYARIGVEKDGKRLQINSNVLQIENELYAPIRPKRVTRSGESPSDALLRGGIEYIEVRSLDINPFSPIGVDEQQVRFLDLFMVWCVLADAPEMSSDELLCTRTNWSRVILEGRKPGLTLGIGCETAQFPLPKVGKDLFRDLKRVAQTLDSIHGGEEYQKVCDELVACFDNPELTFSARILRSMIDEGIGGTGKAFGEAYRNLLREEPLEILQEEEFIAERDASVRRQQEIEAADTEPFAAWLAKHA.

This sequence belongs to the glutamate--cysteine ligase type 1 family. Type 1 subfamily.

It catalyses the reaction L-cysteine + L-glutamate + ATP = gamma-L-glutamyl-L-cysteine + ADP + phosphate + H(+). It functions in the pathway sulfur metabolism; glutathione biosynthesis; glutathione from L-cysteine and L-glutamate: step 1/2. In Salmonella gallinarum (strain 287/91 / NCTC 13346), this protein is Glutamate--cysteine ligase.